The primary structure comprises 95 residues: NLFQFEKLIKKSGMLWYSAYGCYCGWGGQGRPKDATDRCCFVHDCCYGKVTGCNPKCGGTNPCKKQICECDRAAAICFRDNLKTYDSKTYWKYPK.

Residues Lys-7 and Lys-10 are each lipidated (N6-palmitoyl lysine). Ca(2+) is bound by residues Tyr-23, Gly-25, and Gly-27. 5 disulfides stabilise this stretch: Cys-24–Cys-40, Cys-39–Cys-77, Cys-46–Cys-70, Cys-53–Cys-63, and Cys-57–Cys-68. Residue His-43 is part of the active site. Asp-44 serves as a coordination point for Ca(2+). Asp-71 is an active-site residue.

As to quaternary structure, monomer. Ca(2+) serves as cofactor. As to expression, expressed by the venom gland.

The protein localises to the secreted. It catalyses the reaction a 1,2-diacyl-sn-glycero-3-phosphocholine + H2O = a 1-acyl-sn-glycero-3-phosphocholine + a fatty acid + H(+). In terms of biological role, PLA2 catalyzes the calcium-dependent hydrolysis of the 2-acyl groups in 3-sn-phosphoglycerides. Induces local and systemic myotoxicity in an intramuscular mouse model. Induces local edema in a mouse footpad assay. Does not exhibit any anticoagulant effects. Does not mediate an antibacterial effect against Gram-negative and Gram-positive bacteria. This chain is Basic phospholipase A2, found in Agkistrodon piscivorus leucostoma (Western cottonmouth).